The chain runs to 460 residues: Argininosuccinate lyase (460 aa).

This sequence belongs to the lyase 1 family. Argininosuccinate lyase subfamily.

The protein localises to the cytoplasm. The enzyme catalyses 2-(N(omega)-L-arginino)succinate = fumarate + L-arginine. Its pathway is amino-acid biosynthesis; L-arginine biosynthesis; L-arginine from L-ornithine and carbamoyl phosphate: step 3/3. The sequence is that of Argininosuccinate lyase from Actinobacillus succinogenes (strain ATCC 55618 / DSM 22257 / CCUG 43843 / 130Z).